Consider the following 254-residue polypeptide: MRKVFLAGNWKMHYTSVEAADVAKQIVDGVYNINNNVVVMVTPTFTSLCKVCRVTKGTNVLLGAQNMSYENSGARTSEIAPSMLLEFGVDYVILGHSECRTYLGENDEIINKKVLTGLKHPFKYLILCVGETLEEREKGKTLDVVLNQVRNGLASVYESDLQRIILAYEPVWAIGTGKTATKEEAQEVHKAIRLEIQSLYSKSAADNIIIQYGGSVNVDNVEGLMGENDIDGALIGGSSLKADSFLKIINKISK.

9-11 (NWK) contacts substrate. H96 functions as the Electrophile in the catalytic mechanism. The active-site Proton acceptor is E169. Residues G175, S215, and 236–237 (GG) contribute to the substrate site.

It belongs to the triosephosphate isomerase family. Homodimer.

The protein resides in the cytoplasm. It carries out the reaction D-glyceraldehyde 3-phosphate = dihydroxyacetone phosphate. It participates in carbohydrate biosynthesis; gluconeogenesis. Its pathway is carbohydrate degradation; glycolysis; D-glyceraldehyde 3-phosphate from glycerone phosphate: step 1/1. Functionally, involved in the gluconeogenesis. Catalyzes stereospecifically the conversion of dihydroxyacetone phosphate (DHAP) to D-glyceraldehyde-3-phosphate (G3P). The chain is Triosephosphate isomerase from Borrelia recurrentis (strain A1).